The primary structure comprises 101 residues: Apolipoprotein C-II (101 aa).

An N-terminal signal peptide occupies residues M1–G22. The segment at T23–T38 is O-glycosylated at one site. The lipid binding stretch occupies residues A66–L74. The segment at S78–E101 is lipoprotein lipase cofactor.

Belongs to the apolipoprotein C2 family. Proapolipoprotein C-II is synthesized as a sialic acid containing glycoprotein which is subsequently desialylated prior to its proteolytic processing. In terms of processing, proapolipoprotein C-II, the major form found in plasma undergoes proteolytic cleavage of its N-terminal hexapeptide to generate apolipoprotein C-II, which occurs as the minor form in plasma. In terms of tissue distribution, liver and intestine.

Its subcellular location is the secreted. Component of chylomicrons, very low-density lipoproteins (VLDL), low-density lipoproteins (LDL), and high-density lipoproteins (HDL) in plasma. Plays an important role in lipoprotein metabolism as an activator of lipoprotein lipase. Both proapolipoprotein C-II and apolipoprotein C-II can activate lipoprotein lipase. In normolipidemic individuals, it is mainly distributed in the HDL, whereas in hypertriglyceridemic individuals, predominantly found in the VLDL and LDL. This Homo sapiens (Human) protein is Apolipoprotein C-II (APOC2).